The sequence spans 762 residues: Putative BTB/POZ domain-containing protein L272 (762 aa).

Residues 16-86 (TDITIILKDE…FYGQKIKSHN (71 aa)) form the BTB domain. Over residues 390 to 410 (DLDNSNDLNDSNDLDDSDDSN) the composition is skewed to acidic residues. Disordered regions lie at residues 390-411 (DLDN…DSND) and 532-556 (ISDN…NSDN). Residues 532–543 (ISDNSDNLNNSD) show a composition bias toward low complexity. Positions 737-762 (FSENYCDELINRLNNALKKIEQKYPN) form a coiled coil.

The protein belongs to the mimivirus BTB/WD family.

The chain is Putative BTB/POZ domain-containing protein L272 from Acanthamoeba polyphaga (Amoeba).